Reading from the N-terminus, the 739-residue chain is Phosphoribosylformylglycinamidine synthase subunit PurL (739 aa).

H54 is a catalytic residue. ATP-binding residues include Y57 and K96. E98 contacts Mg(2+). Substrate is bound by residues 99-102 (SHNH) and R121. The active-site Proton acceptor is H100. D122 is a Mg(2+) binding site. Residue Q245 participates in substrate binding. D273 lines the Mg(2+) pocket. Position 317-319 (317-319 (ESQ)) interacts with substrate. ATP is bound by residues D500 and G537. N538 serves as a coordination point for Mg(2+). S540 contacts substrate.

This sequence belongs to the FGAMS family. As to quaternary structure, monomer. Part of the FGAM synthase complex composed of 1 PurL, 1 PurQ and 2 PurS subunits.

Its subcellular location is the cytoplasm. The catalysed reaction is N(2)-formyl-N(1)-(5-phospho-beta-D-ribosyl)glycinamide + L-glutamine + ATP + H2O = 2-formamido-N(1)-(5-O-phospho-beta-D-ribosyl)acetamidine + L-glutamate + ADP + phosphate + H(+). The protein operates within purine metabolism; IMP biosynthesis via de novo pathway; 5-amino-1-(5-phospho-D-ribosyl)imidazole from N(2)-formyl-N(1)-(5-phospho-D-ribosyl)glycinamide: step 1/2. Functionally, part of the phosphoribosylformylglycinamidine synthase complex involved in the purines biosynthetic pathway. Catalyzes the ATP-dependent conversion of formylglycinamide ribonucleotide (FGAR) and glutamine to yield formylglycinamidine ribonucleotide (FGAM) and glutamate. The FGAM synthase complex is composed of three subunits. PurQ produces an ammonia molecule by converting glutamine to glutamate. PurL transfers the ammonia molecule to FGAR to form FGAM in an ATP-dependent manner. PurS interacts with PurQ and PurL and is thought to assist in the transfer of the ammonia molecule from PurQ to PurL. The polypeptide is Phosphoribosylformylglycinamidine synthase subunit PurL (Bacillus cereus (strain B4264)).